Consider the following 210-residue polypeptide: Ribosomal RNA large subunit methyltransferase E (210 aa).

Residues Gly-60, Trp-62, Asp-85, Asp-101, and Asp-126 each coordinate S-adenosyl-L-methionine. Residue Lys-166 is the Proton acceptor of the active site. The segment covering 191–200 has biased composition (basic and acidic residues); it reads KPKASRDKSS. The segment at 191–210 is disordered; that stretch reads KPKASRDKSSETFLVARDLK.

The protein belongs to the class I-like SAM-binding methyltransferase superfamily. RNA methyltransferase RlmE family.

The protein localises to the cytoplasm. The enzyme catalyses uridine(2552) in 23S rRNA + S-adenosyl-L-methionine = 2'-O-methyluridine(2552) in 23S rRNA + S-adenosyl-L-homocysteine + H(+). Its function is as follows. Specifically methylates the uridine in position 2552 of 23S rRNA at the 2'-O position of the ribose in the fully assembled 50S ribosomal subunit. In Bordetella bronchiseptica (strain ATCC BAA-588 / NCTC 13252 / RB50) (Alcaligenes bronchisepticus), this protein is Ribosomal RNA large subunit methyltransferase E.